The primary structure comprises 88 residues: Small ribosomal subunit protein bS20 (88 aa).

It belongs to the bacterial ribosomal protein bS20 family.

In terms of biological role, binds directly to 16S ribosomal RNA. The polypeptide is Small ribosomal subunit protein bS20 (Methylorubrum populi (strain ATCC BAA-705 / NCIMB 13946 / BJ001) (Methylobacterium populi)).